The chain runs to 281 residues: Merozoite surface protein 1 (281 aa).

The first 19 residues, 1–19, serve as a signal peptide directing secretion; the sequence is MKIIFFLCSFLFFIINTQC. Residues 63–100 are compositionally biased toward low complexity; it reads ASAQSGASAQSGASAQSGASAQSGTSGPSGPSGTSPSS. A disordered region spans residues 63–126; that stretch reads ASAQSGASAQ…PADASDSDAK (64 aa). Polar residues predominate over residues 101-110; sequence RSNTLPRSNT. N-linked (GlcNAc...) asparagine glycosylation occurs at N109. Over residues 111 to 120 the composition is skewed to low complexity; sequence SSGASPPADA. Residue N248 is glycosylated (N-linked (GlcNAc...) asparagine).

As to quaternary structure, forms a complex composed of subunits p83, p30, p38, and p42 which remain non-covalently associated; the complex is formed at the merozoite surface prior to egress from host erythrocytes. Forms a complex composed of processed MSP1 subunits, MSP6 subunit p36 and MSP7; the complex is formed at the merozoite surface prior to egress from host erythrocytes. Within the complex, interacts (via subunit p38) with MSP6 subunit p36 and (via subunits p83, p30 and p38) with MSP7 (via subunit p22). Forms a complex composed of MSP1, MSP6, DBLMSP1 and DBLMSP2. Within the complex, interacts (via subunit p38) with DBLMSP1 and DBLMSP2. Forms a complex composed of MSP1, and rhoptry proteins RhopH3, RAP1 and CLAG9/RhopH3. Within the complex, interacts (via subunits p42 and p19) with RhopH3 (via C-terminus). Forms a complex composed of MSP1, MSP6, MSP7, MSP9 and MSP3; within the complex, MSP6 and MSP9 mediate the binding to the host erythrocyte. Interacts (via subunits p19 and p42) with MSP9; the interaction is direct; MSP1 subunits p19 or p42, and MSP9 form a co-ligand complex that interacts with host SLC4A1/Band 3 protein. May interact with PFD6. Interacts with host spectrin. The p190 precursor is cleaved by SUB1 prior to merozoite egress into 4 subunits p83, p30, p38, and p42 which remain non-covalently associated. SUB1-mediated proteolytic cleavage occurs in an orderly manner; the first cleavage occurs at the p30/p38 site, followed by cleavage at the p83/p30 site, the last cleavage occurs at the p38/p42 site. The order of cleavage is essential for parasite viability. SUB1-mediated processing is essential for merozoite egress. In a second processing step during erythrocyte invasion, p42 is cleaved by SUB2 into p33 and p19; the latter remains attached to the merozoite surface via its GPI-anchor and is endocytosed during the subsequent ring stage.

It localises to the cell membrane. The protein localises to the secreted. Its function is as follows. During the asexual blood stage, involved in merozoite egress from host erythrocytes possibly via its interaction with the host cytoskeleton protein spectrin resulting in the destabilization of the host cytoskeleton and thus leading to erythrocyte cell membrane rupture. Involved in the binding to host erythrocytes and is required for host erythrocyte invasion. This chain is Merozoite surface protein 1, found in Plasmodium falciparum (isolate NF7 / Ghana).